A 974-amino-acid polypeptide reads, in one-letter code: Probable proton ATPase 1A (974 aa).

The segment covering 1–23 (MSSKKYELDAAAFEDKPESHSDA) has biased composition (basic and acidic residues). The disordered stretch occupies residues 1–61 (MSSKKYELDA…ATDLLPPSKG (61 aa)). The Cytoplasmic segment spans residues 1–92 (MSSKKYELDA…KTPSWLIYVR (92 aa)). The chain crosses the membrane as a helical span at residues 93-112 (GLWGPMPAALWIAIIIEFAL). Over 113 to 117 (ENWPD) the chain is Extracellular. A helical transmembrane segment spans residues 118–137 (GAILFAIQIANATIGWYETI). Residues 138–264 (KAGDAVAALK…LGNIHVILRR (127 aa)) lie on the Cytoplasmic side of the membrane. The helical transmembrane segment at 265–286 (VMFSLCAISFMLCMCCFIYLLA) threads the bilayer. Topologically, residues 287–294 (RFYETFRH) are extracellular. A helical transmembrane segment spans residues 295–321 (ALQFAVVVLVVSIPIALEIVVTTTLAV). Residues 322–630 (GSKHLSKHKI…AVHGATDAAR (309 aa)) are Cytoplasmic-facing. The active-site 4-aspartylphosphate intermediate is D351. The Mg(2+) site is built by D605 and D609. Residues 631–651 (AAADMVLTEPGLSVVVEAMLV) form a helical membrane-spanning segment. Topologically, residues 652–661 (SREVFQRMLS) are extracellular. The chain crosses the membrane as a helical span at residues 662–684 (FLTYRISATLQLVCFFFIACFSL). Residues 685–697 (TPKAYGSVDPHFQ) lie on the Cytoplasmic side of the membrane. A helical transmembrane segment spans residues 698-712 (FFHLPVLMFMLITLL). The Extracellular portion of the chain corresponds to 713–737 (NDGCLMTIGYDHVIPSERPQKWNLP). D714 provides a ligand contact to Mg(2+). A helical membrane pass occupies residues 738 to 761 (VVFVSASILAAVACGSSLMLLWIG). Residues 762–812 (LEGYSSQYYENSWFHRLGLAQLPQGKLVTMMYLKISISDFLTLFSSRTGGH) are Cytoplasmic-facing. Residues 813 to 840 (FFFYMPPSPILFCGAIISLLVSTMAASF) form a helical membrane-spanning segment. Over 841–868 (WHKSRPDNVLTEGLAWGQTNAEKLLPLW) the chain is Extracellular. The chain crosses the membrane as a helical span at residues 869–887 (VWIYCIVWWFVQDVVKVLA). Residues 888 to 974 (HICMDAVDLF…VNVYVSRDQK (87 aa)) lie on the Cytoplasmic side of the membrane. A compositionally biased stretch (basic and acidic residues) spans 950-959 (GLREDTHSPI). Residues 950–974 (GLREDTHSPIEEASPVNVYVSRDQK) form a disordered region.

It belongs to the cation transport ATPase (P-type) (TC 3.A.3) family. Type IIIA subfamily.

It localises to the membrane. The catalysed reaction is ATP + H2O + H(+)(in) = ADP + phosphate + 2 H(+)(out). The chain is Probable proton ATPase 1A (H1A) from Leishmania donovani.